A 569-amino-acid polypeptide reads, in one-letter code: Urease subunit alpha (569 aa).

In terms of domain architecture, Urease spans 131 to 569 (GGIDTHIHFI…LPLAQRYLLL (439 aa)). Residues histidine 136, histidine 138, and lysine 219 each coordinate Ni(2+). Residue lysine 219 is modified to N6-carboxylysine. Substrate is bound at residue histidine 221. Ni(2+) contacts are provided by histidine 248 and histidine 274. Residue histidine 322 is the Proton donor of the active site. Residue aspartate 362 coordinates Ni(2+).

Belongs to the metallo-dependent hydrolases superfamily. Urease alpha subunit family. As to quaternary structure, heterotrimer of UreA (gamma), UreB (beta) and UreC (alpha) subunits. Three heterotrimers associate to form the active enzyme. Ni cation is required as a cofactor. Carboxylation allows a single lysine to coordinate two nickel ions.

The protein localises to the cytoplasm. It carries out the reaction urea + 2 H2O + H(+) = hydrogencarbonate + 2 NH4(+). The protein operates within nitrogen metabolism; urea degradation; CO(2) and NH(3) from urea (urease route): step 1/1. The polypeptide is Urease subunit alpha (Synechococcus sp. (strain CC9605)).